A 246-amino-acid polypeptide reads, in one-letter code: MLLIPAIDLKDGRCVRLRQGDLDDATVFSEDPAAMASHWLDLGARRLHLVDLNGAVAGKPKNEAPIKAILQAVGDDIPVQIGGGIRDLDTIERYLDAGISYVIIGTAAVKNPGFLQDACGAFPGQIIVGLDARDGKVATDGWSKLTRHDVLDLAKKFEDYGCEAIIYTDIGRDGMLSGVNVDATVRLAQHVRIPVFASGGIAGLSDIEALCAVEDDGVEGAILGRSIYEGALDFQAAQARADELAK.

The Proton acceptor role is filled by Asp8. The active-site Proton donor is the Asp131.

Belongs to the HisA/HisF family.

Its subcellular location is the cytoplasm. The catalysed reaction is 1-(5-phospho-beta-D-ribosyl)-5-[(5-phospho-beta-D-ribosylamino)methylideneamino]imidazole-4-carboxamide = 5-[(5-phospho-1-deoxy-D-ribulos-1-ylimino)methylamino]-1-(5-phospho-beta-D-ribosyl)imidazole-4-carboxamide. It functions in the pathway amino-acid biosynthesis; L-histidine biosynthesis; L-histidine from 5-phospho-alpha-D-ribose 1-diphosphate: step 4/9. In Bordetella bronchiseptica (strain ATCC BAA-588 / NCTC 13252 / RB50) (Alcaligenes bronchisepticus), this protein is 1-(5-phosphoribosyl)-5-[(5-phosphoribosylamino)methylideneamino] imidazole-4-carboxamide isomerase.